Reading from the N-terminus, the 577-residue chain is Insulin-like growth factor 2 mRNA-binding protein 1 (577 aa).

RRM domains follow at residues Asn-2–Pro-75 and Arg-81–Asp-156. Phosphoserine occurs at positions 12 and 73. Residues Ala-160–Lys-190 are disordered. Ser-181 bears the Phosphoserine mark. 4 consecutive KH domains span residues Asp-195–Ile-260, Glu-276–Ile-343, Gln-405–Ile-470, and Lys-487–Ile-553. The interval Ile-310 to Glu-324 is sufficient for nuclear export. The interval Glu-485–Pro-495 is sufficient for nuclear export. Thr-528 carries the phosphothreonine modification.

This sequence belongs to the RRM IMP/VICKZ family. In terms of assembly, can form homodimers and heterodimers with IGF2BP1 and IGF2BP3. Component of the coding region determinant (CRD)-mediated complex, composed of DHX9, HNRNPU, IGF2BP1, SYNCRIP and YBX1. During HCV infection, identified in a HCV IRES-mediated translation complex, at least composed of EIF3C, IGF2BP1, RPS3 and HCV RNA-replicon. Interacts (via the KH domains) with HIV-1 GAG (via the second zinc finger motif of NC). Associates (via the RRM domains and KH domains) with HIV-1 particles. Identified in a mRNP complex, composed of at least DHX9, DDX3X, ELAVL1, HNRNPU, IGF2BP1, ILF3, PABPC1, PCBP2, PTBP2, STAU1, STAU2, SYNCRIP and YBX1. Identified in a IGF2BP1-dependent mRNP granule complex containing untranslated mRNAs. Interacts with DHX9, ELAVL2, HNRNPA2B1, HNRNPC, HNRNPH1, HNRNPU, IGF2BP2, ILF2, and YBX1. Interacts with FMR1. Component of a multisubunit autoregulatory RNP complex (ARC), at least composed of IGF2BP1, PABPC1 and CSDE1/UNR. Directly interacts with PABPC1. Component of a TAU mRNP complex, at least composed of IGF2BP1, ELAVL4 and G3BP. Interacts with ELAVL4 in an RNA-dependent manner. Associates with microtubules and polysomes. Interacts with AGO1 and AGO2. Interacts with ELAVL1 and MATR3. Interacts (via KH3 and KH4 domains) with SEPIN14P20 peptide RBRP; the interaction results in increased binding of IGF2BP1 to N6-methyladenosine (m6A)-containing mRNAs. Post-translationally, phosphorylated at Ser-181 by mTORC2 cotranslationally, promoting binding to the 3'-UTR of IGF2 mRNA. Mainly expressed in the embryo, including in fetal liver, fetal lung, fetal kidney, fetal thymus (at protein level). Also expressed follicles of ovary, as well as in gonocytes of testis, spermatogonia, semen, oocytes and placenta (at protein level). Expressed in various cancers, including testis and lung cancers (at protein level), as well as kidney, prostate and trachea cancers.

Its subcellular location is the nucleus. The protein localises to the cytoplasm. It localises to the perinuclear region. It is found in the P-body. The protein resides in the stress granule. Its subcellular location is the cell projection. The protein localises to the lamellipodium. It localises to the dendrite. It is found in the dendritic spine. The protein resides in the growth cone. Its subcellular location is the filopodium. The protein localises to the axon. RNA-binding factor that recruits target transcripts to cytoplasmic protein-RNA complexes (mRNPs). This transcript 'caging' into mRNPs allows mRNA transport and transient storage. It also modulates the rate and location at which target transcripts encounter the translational apparatus and shields them from endonuclease attacks or microRNA-mediated degradation. Preferentially binds to N6-methyladenosine (m6A)-containing mRNAs and increases their stability. Plays a direct role in the transport and translation of transcripts required for axonal regeneration in adult sensory neurons. Regulates localized beta-actin/ACTB mRNA translation, a crucial process for cell polarity, cell migration and neurite outgrowth. Co-transcriptionally associates with the ACTB mRNA in the nucleus. This binding involves a conserved 54-nucleotide element in the ACTB mRNA 3'-UTR, known as the 'zipcode'. The RNP thus formed is exported to the cytoplasm, binds to a motor protein and is transported along the cytoskeleton to the cell periphery. During transport, prevents ACTB mRNA from being translated into protein. When the RNP complex reaches its destination near the plasma membrane, IGF2BP1 is phosphorylated. This releases the mRNA, allowing ribosomal 40S and 60S subunits to assemble and initiate ACTB protein synthesis. Monomeric ACTB then assembles into the subcortical actin cytoskeleton. During neuronal development, key regulator of neurite outgrowth, growth cone guidance and neuronal cell migration, presumably through the spatiotemporal fine tuning of protein synthesis, such as that of ACTB. May regulate mRNA transport to activated synapses. Binds to and stabilizes ABCB1/MDR-1 mRNA. During interstinal wound repair, interacts with and stabilizes PTGS2 transcript. PTGS2 mRNA stabilization may be crucial for colonic mucosal wound healing. Binds to the 3'-UTR of IGF2 mRNA by a mechanism of cooperative and sequential dimerization and regulates IGF2 mRNA subcellular localization and translation. Binds to MYC mRNA, in the coding region instability determinant (CRD) of the open reading frame (ORF), hence preventing MYC cleavage by endonucleases and possibly microRNA targeting to MYC-CRD. Binding to MYC mRNA is enhanced by m6A-modification of the CRD. Binds to the 3'-UTR of CD44 mRNA and stabilizes it, hence promotes cell adhesion and invadopodia formation in cancer cells. Binds to the oncofetal H19 transcript and to the neuron-specific TAU mRNA and regulates their localizations. Binds to and stabilizes BTRC/FBW1A mRNA. Binds to the adenine-rich autoregulatory sequence (ARS) located in PABPC1 mRNA and represses its translation. PABPC1 mRNA-binding is stimulated by PABPC1 protein. Prevents BTRC/FBW1A mRNA degradation by disrupting microRNA-dependent interaction with AGO2. Promotes the directed movement of tumor-derived cells by fine-tuning intracellular signaling networks. Binds to MAPK4 3'-UTR and inhibits its translation. Interacts with PTEN transcript open reading frame (ORF) and prevents mRNA decay. This combined action on MAPK4 (down-regulation) and PTEN (up-regulation) antagonizes HSPB1 phosphorylation, consequently it prevents G-actin sequestration by phosphorylated HSPB1, allowing F-actin polymerization. Hence enhances the velocity of cell migration and stimulates directed cell migration by PTEN-modulated polarization. Interacts with Hepatitis C virus (HCV) 5'-UTR and 3'-UTR and specifically enhances translation at the HCV IRES, but not 5'-cap-dependent translation, possibly by recruiting eIF3. Interacts with HIV-1 GAG protein and blocks the formation of infectious HIV-1 particles. Reduces HIV-1 assembly by inhibiting viral RNA packaging, as well as assembly and processing of GAG protein on cellular membranes. During cellular stress, such as oxidative stress or heat shock, stabilizes target mRNAs that are recruited to stress granules, including CD44, IGF2, MAPK4, MYC, PTEN, RAPGEF2 and RPS6KA5 transcripts. This chain is Insulin-like growth factor 2 mRNA-binding protein 1 (IGF2BP1), found in Homo sapiens (Human).